The sequence spans 291 residues: Polyamine aminopropyltransferase (291 aa).

The PABS domain occupies 5-245; sequence PGPISLIEPL…YAVNYILGSL (241 aa). Residue glutamine 36 participates in S-methyl-5'-thioadenosine binding. Spermidine-binding residues include histidine 67 and glutamate 91. Residues aspartate 111 and 143–144 each bind S-methyl-5'-thioadenosine; that span reads DG. Residue aspartate 164 is the Proton acceptor of the active site.

The protein belongs to the spermidine/spermine synthase family. As to quaternary structure, homodimer or homotetramer.

Its subcellular location is the cytoplasm. The enzyme catalyses S-adenosyl 3-(methylsulfanyl)propylamine + putrescine = S-methyl-5'-thioadenosine + spermidine + H(+). Its pathway is amine and polyamine biosynthesis; spermidine biosynthesis; spermidine from putrescine: step 1/1. Catalyzes the irreversible transfer of a propylamine group from the amino donor S-adenosylmethioninamine (decarboxy-AdoMet) to putrescine (1,4-diaminobutane) to yield spermidine. This is Polyamine aminopropyltransferase from Pyrobaculum neutrophilum (strain DSM 2338 / JCM 9278 / NBRC 100436 / V24Sta) (Thermoproteus neutrophilus).